We begin with the raw amino-acid sequence, 425 residues long: Serine hydroxymethyltransferase (425 aa).

(6S)-5,6,7,8-tetrahydrofolate contacts are provided by residues Leu-126 and 130–132 (GHL). Residue Lys-234 is modified to N6-(pyridoxal phosphate)lysine.

The protein belongs to the SHMT family. Homodimer. Pyridoxal 5'-phosphate is required as a cofactor.

Its subcellular location is the cytoplasm. The enzyme catalyses (6R)-5,10-methylene-5,6,7,8-tetrahydrofolate + glycine + H2O = (6S)-5,6,7,8-tetrahydrofolate + L-serine. It functions in the pathway one-carbon metabolism; tetrahydrofolate interconversion. Its pathway is amino-acid biosynthesis; glycine biosynthesis; glycine from L-serine: step 1/1. Its function is as follows. Catalyzes the reversible interconversion of serine and glycine with tetrahydrofolate (THF) serving as the one-carbon carrier. This reaction serves as the major source of one-carbon groups required for the biosynthesis of purines, thymidylate, methionine, and other important biomolecules. Also exhibits THF-independent aldolase activity toward beta-hydroxyamino acids, producing glycine and aldehydes, via a retro-aldol mechanism. The protein is Serine hydroxymethyltransferase of Desulfotalea psychrophila (strain LSv54 / DSM 12343).